We begin with the raw amino-acid sequence, 150 residues long: Peptide deformylase 2 (150 aa).

Positions 89 and 131 each coordinate Fe cation. The active site involves Glu132. Fe cation is bound at residue His135.

The protein belongs to the polypeptide deformylase family. It depends on Fe(2+) as a cofactor.

The enzyme catalyses N-terminal N-formyl-L-methionyl-[peptide] + H2O = N-terminal L-methionyl-[peptide] + formate. Removes the formyl group from the N-terminal Met of newly synthesized proteins. Requires at least a dipeptide for an efficient rate of reaction. N-terminal L-methionine is a prerequisite for activity but the enzyme has broad specificity at other positions. This chain is Peptide deformylase 2, found in Clostridium acetobutylicum (strain ATCC 824 / DSM 792 / JCM 1419 / IAM 19013 / LMG 5710 / NBRC 13948 / NRRL B-527 / VKM B-1787 / 2291 / W).